The following is a 489-amino-acid chain: N-succinylglutamate 5-semialdehyde dehydrogenase (489 aa).

224–229 lines the NAD(+) pocket; that stretch reads GSAKVG. Catalysis depends on residues Glu-247 and Cys-281.

Belongs to the aldehyde dehydrogenase family. AstD subfamily.

The catalysed reaction is N-succinyl-L-glutamate 5-semialdehyde + NAD(+) + H2O = N-succinyl-L-glutamate + NADH + 2 H(+). It functions in the pathway amino-acid degradation; L-arginine degradation via AST pathway; L-glutamate and succinate from L-arginine: step 4/5. Catalyzes the NAD-dependent reduction of succinylglutamate semialdehyde into succinylglutamate. The protein is N-succinylglutamate 5-semialdehyde dehydrogenase of Chromohalobacter salexigens (strain ATCC BAA-138 / DSM 3043 / CIP 106854 / NCIMB 13768 / 1H11).